The chain runs to 787 residues: Protein FAM149A (787 aa).

7 disordered regions span residues 22–105, 144–175, 189–226, 238–284, 432–455, 573–602, and 665–697; these read SPAV…SSGA, GSNS…APGP, EEWT…PTNF, ASES…SWRD, DGDE…GLPP, LQQR…ASSR, and AVQT…SYRG. Residues 37 to 46 show a composition bias toward polar residues; that stretch reads SVDSGASTSL. Composition is skewed to low complexity over residues 51 to 65 and 96 to 105; these read TLTL…TAAS and SGSLPSSSGA. A compositionally biased stretch (polar residues) spans 144-155; sequence GSNSVTASSPRN. The segment covering 189 to 200 has biased composition (acidic residues); sequence EEWTSDSDSQDD. A compositionally biased stretch (basic and acidic residues) spans 201–220; the sequence is PEGRGLSEGLRKQSSEKSKD. The segment covering 239-250 has biased composition (low complexity); sequence SESPSSFSSSGS. A compositionally biased stretch (polar residues) spans 251–261; the sequence is RTPTEAHNSWP. The segment covering 262–274 has biased composition (low complexity); that stretch reads GSSTQSSTTGLST.

This sequence belongs to the FAM149 family.

In Mus musculus (Mouse), this protein is Protein FAM149A (Fam149a).